The following is a 149-amino-acid chain: Transcription antitermination protein NusB (149 aa).

It belongs to the NusB family.

Functionally, involved in transcription antitermination. Required for transcription of ribosomal RNA (rRNA) genes. Binds specifically to the boxA antiterminator sequence of the ribosomal RNA (rrn) operons. This is Transcription antitermination protein NusB from Sphingopyxis alaskensis (strain DSM 13593 / LMG 18877 / RB2256) (Sphingomonas alaskensis).